The primary structure comprises 301 residues: RNA polymerase II holoenzyme cyclin-like subunit (301 aa).

The Cyclin N-terminal domain occupies 53 to 142 (QQLIKLGKRM…LGECEFALIS (90 aa)).

The protein belongs to the cyclin family. Cyclin C subfamily. In terms of assembly, component of the srb8-11 complex, a regulatory module of the Mediator complex.

Its subcellular location is the nucleus. In terms of biological role, component of the srb8-11 complex. The srb8-11 complex is a regulatory module of the Mediator complex which is itself involved in regulation of basal and activated RNA polymerase II-dependent transcription. The srb8-11 complex may be involved in the transcriptional repression of a subset of genes regulated by Mediator. It may inhibit the association of the Mediator complex with RNA polymerase II to form the holoenzyme complex. The srb8-11 complex phosphorylates the C-terminal domain (CTD) of the largest subunit of RNA polymerase II. The protein is RNA polymerase II holoenzyme cyclin-like subunit (ssn8) of Aspergillus oryzae (strain ATCC 42149 / RIB 40) (Yellow koji mold).